The primary structure comprises 325 residues: Phospho-N-acetylmuramoyl-pentapeptide-transferase (325 aa).

Transmembrane regions (helical) follow at residues 9 to 29, 53 to 73, 77 to 97, 112 to 132, 154 to 174, 182 to 202, 204 to 224, 231 to 251, 257 to 277, and 305 to 325; these read ALLV…PWLL, TMGG…FQAF, TLLL…DDYL, KLLG…AFLG, LGNV…ANAV, GLCS…SLAL, EKGL…FLVY, VFMG…FAVL, FLLL…IQVI, and KIVL…GYGL.

It belongs to the glycosyltransferase 4 family. MraY subfamily. It depends on Mg(2+) as a cofactor.

It localises to the cell membrane. The enzyme catalyses UDP-N-acetyl-alpha-D-muramoyl-L-alanyl-gamma-D-glutamyl-meso-2,6-diaminopimeloyl-D-alanyl-D-alanine + di-trans,octa-cis-undecaprenyl phosphate = di-trans,octa-cis-undecaprenyl diphospho-N-acetyl-alpha-D-muramoyl-L-alanyl-D-glutamyl-meso-2,6-diaminopimeloyl-D-alanyl-D-alanine + UMP. It functions in the pathway cell wall biogenesis; peptidoglycan biosynthesis. Functionally, catalyzes the initial step of the lipid cycle reactions in the biosynthesis of the cell wall peptidoglycan: transfers peptidoglycan precursor phospho-MurNAc-pentapeptide from UDP-MurNAc-pentapeptide onto the lipid carrier undecaprenyl phosphate, yielding undecaprenyl-pyrophosphoryl-MurNAc-pentapeptide, known as lipid I. This Carboxydothermus hydrogenoformans (strain ATCC BAA-161 / DSM 6008 / Z-2901) protein is Phospho-N-acetylmuramoyl-pentapeptide-transferase.